A 142-amino-acid chain; its full sequence is FAD synthase (142 aa).

ATP contacts are provided by residues 9 to 10 (TF), 14 to 17 (HPGH), aspartate 92, and tyrosine 119.

Belongs to the archaeal FAD synthase family. Homodimer. It depends on a divalent metal cation as a cofactor.

The catalysed reaction is FMN + ATP + H(+) = FAD + diphosphate. It functions in the pathway cofactor biosynthesis; FAD biosynthesis; FAD from FMN: step 1/1. In terms of biological role, catalyzes the transfer of the AMP portion of ATP to flavin mononucleotide (FMN) to produce flavin adenine dinucleotide (FAD) coenzyme. This is FAD synthase from Halorhabdus utahensis (strain DSM 12940 / JCM 11049 / AX-2).